Consider the following 316-residue polypeptide: D-alanine--D-alanine ligase (316 aa).

One can recognise an ATP-grasp domain in the interval 107-303 (KEVFAARGLT…FEDLVERILI (197 aa)). Residue 133-188 (AEGFGYPVVVKPSQEGSSVGVSIVKSPEELPSALELAFRYDDDILVERFIKGREIQ) coordinates ATP. Residues Asp-256, Glu-269, and Asn-271 each contribute to the Mg(2+) site.

This sequence belongs to the D-alanine--D-alanine ligase family. Requires Mg(2+) as cofactor. Mn(2+) serves as cofactor.

It localises to the cytoplasm. It catalyses the reaction 2 D-alanine + ATP = D-alanyl-D-alanine + ADP + phosphate + H(+). The protein operates within cell wall biogenesis; peptidoglycan biosynthesis. Functionally, cell wall formation. The protein is D-alanine--D-alanine ligase of Geobacter sulfurreducens (strain ATCC 51573 / DSM 12127 / PCA).